We begin with the raw amino-acid sequence, 178 residues long: Cell division protein ZapC (178 aa).

It belongs to the ZapC family. Interacts directly with FtsZ.

It localises to the cytoplasm. Functionally, contributes to the efficiency of the cell division process by stabilizing the polymeric form of the cell division protein FtsZ. Acts by promoting interactions between FtsZ protofilaments and suppressing the GTPase activity of FtsZ. In Aeromonas hydrophila subsp. hydrophila (strain ATCC 7966 / DSM 30187 / BCRC 13018 / CCUG 14551 / JCM 1027 / KCTC 2358 / NCIMB 9240 / NCTC 8049), this protein is Cell division protein ZapC.